Reading from the N-terminus, the 141-residue chain is Hemoglobin subunit alpha (141 aa).

Residues 1 to 141 (VLSPADKNNV…VSTVLTSKYR (141 aa)) enclose the Globin domain. Ser-3 bears the Phosphoserine mark. Residues Lys-7 and Lys-11 each carry the N6-succinyllysine modification. Residue Lys-16 is modified to N6-acetyllysine; alternate. Lys-16 bears the N6-succinyllysine; alternate mark. The residue at position 24 (Tyr-24) is a Phosphotyrosine. Residue Ser-35 is modified to Phosphoserine. Position 40 is an N6-succinyllysine (Lys-40). At Ser-49 the chain carries Phosphoserine. Position 58 (His-58) interacts with O2. His-87 contributes to the heme b binding site. Position 102 is a phosphoserine (Ser-102). At Thr-108 the chain carries Phosphothreonine. Phosphoserine is present on residues Ser-124 and Ser-131. A phosphothreonine mark is found at Thr-134 and Thr-137. At Ser-138 the chain carries Phosphoserine.

Belongs to the globin family. Heterotetramer of two alpha chains and two beta chains. In terms of tissue distribution, red blood cells.

Functionally, involved in oxygen transport from the lung to the various peripheral tissues. In terms of biological role, hemopressin acts as an antagonist peptide of the cannabinoid receptor CNR1. Hemopressin-binding efficiently blocks cannabinoid receptor CNR1 and subsequent signaling. This Urocitellus townsendii (Townsend's ground squirrel) protein is Hemoglobin subunit alpha (HBA).